Here is a 2130-residue protein sequence, read N- to C-terminus: Bromodomain adjacent to zinc finger domain protein 2B (2130 aa).

7 disordered regions span residues Met1–Ala42, Leu82–Gly118, Gly151–Pro293, Lys491–Asn518, Val543–Gly633, Glu756–Glu790, and Arg944–Glu966. Residues Thr8–Ser33 are compositionally biased toward low complexity. Residues Glu183 to Ser206 show a composition bias toward low complexity. A compositionally biased stretch (acidic residues) spans Asp207–Glu234. Over residues Gly250–Thr270 the composition is skewed to basic and acidic residues. The segment covering Gln272 to His283 has biased composition (polar residues). A compositionally biased stretch (low complexity) spans Ser284–Pro293. Over residues Thr492–Pro505 the composition is skewed to polar residues. The span at Val543–Asp554 shows a compositional bias: basic and acidic residues. Positions Asp555–Thr611 are enriched in acidic residues. Low complexity predominate over residues Thr623–Gly633. Residues Val687–Pro762 enclose the MBD domain. A compositionally biased stretch (basic and acidic residues) spans Glu756–Arg775. Residues Ala797–Lys984 are a coiled coil. Residues Gly1010 to Leu1075 enclose the DDT domain. Disordered stretches follow at residues Thr1186–Val1265, Ser1431–Ser1454, Val1499–Met1545, and His1773–Asn1795. Positions Ser1220–Lys1244 are enriched in acidic residues. The segment covering Glu1245 to Val1254 has biased composition (basic and acidic residues). Over residues Ser1514–Ser1526 the composition is skewed to pro residues. The PHD-type zinc finger occupies Lys1895–Lys1945. The tract at residues Gln1957–Lys2019 is disordered. A compositionally biased stretch (basic and acidic residues) spans Gly1991–Glu2002. Positions Val2004–Phe2014 are enriched in polar residues. The Bromo domain maps to Arg2022 to Ile2126.

Belongs to the WAL family.

It is found in the nucleus. Its function is as follows. Regulatory subunit of the ATP-dependent BRF-1 and BRF-5 ISWI chromatin remodeling complexes, which form ordered nucleosome arrays on chromatin and facilitate access to DNA during DNA-templated processes such as DNA replication, transcription, and repair. Both complexes regulate the spacing of nucleosomes along the chromatin and have the ability to slide mononucleosomes to the center of a DNA template. The BRF-1 ISWI chromatin remodeling complex has a lower ATP hydrolysis rate than the BRF-5 ISWI chromatin remodeling complex. Chromatin reader protein. Represses the expression of mitochondrial function-related genes, perhaps by transcriptional regulation. In Gallus gallus (Chicken), this protein is Bromodomain adjacent to zinc finger domain protein 2B (BAZ2B).